A 39-amino-acid chain; its full sequence is Photosystem II reaction center protein X (39 aa).

A helical transmembrane segment spans residues 10–30 (SSLVWAAVIVVIPAAVALVLI).

Belongs to the PsbX family. Type 1 subfamily. As to quaternary structure, PSII is composed of 1 copy each of membrane proteins PsbA, PsbB, PsbC, PsbD, PsbE, PsbF, PsbH, PsbI, PsbJ, PsbK, PsbL, PsbM, PsbT, PsbX, PsbY, Psb30/Ycf12, peripheral proteins PsbO, CyanoQ (PsbQ), PsbU, PsbV and a large number of cofactors. It forms dimeric complexes.

The protein resides in the cellular thylakoid membrane. Involved in the binding and/or turnover of quinones at the Q(B) site of photosystem II (PSII). PSII is a light-driven water plastoquinone oxidoreductase, using light energy to abstract electrons from H(2)O, generating a proton gradient subsequently used for ATP formation. In Prochlorococcus marinus (strain MIT 9303), this protein is Photosystem II reaction center protein X.